We begin with the raw amino-acid sequence, 941 residues long: MVFLPLKWSLATMSFLLSSLLALLTVSTPSWCQSTEASPKRSDGTPFPWNKIRLPEYVIPVHYDLLIHANLTTLTFWGTTKVEITASQPTSTIILHSHHLQISRATLRKGAGERLSEEPLQVLEHPRQEQIALLAPEPLLVGLPYTVVIHYAGNLSETFHGFYKSTYRTKEGELRILASTQFEPTAARMAFPCFDEPAFKASFSIKIRREPRHLAISNMPLVKSVTVAEGLIEDHFDVTVKMSTYLVAFIISDFESVSKITKSGVKVSVYAVPDKINQADYALDAAVTLLEFYEDYFSIPYPLPKQDLAAIPDFQSGAMENWGLTTYRESALLFDAEKSSASSKLGITMTVAHELAHQWFGNLVTMEWWNDLWLNEGFAKFMEFVSVSVTHPELKVGDYFFGKCFDAMEVDALNSSHPVSTPVENPAQIREMFDDVSYDKGACILNMLREYLSADAFKSGIVQYLQKHSYKNTKNEDLWDSMASICPTDGVKGMDGFCSRSQHSSSSSHWHQEGVDVKTMMNTWTLQKGFPLITITVRGRNVHMKQEHYMKGSDGAPDTGYLWHVPLTFITSKSDMVHRFLLKTKTDVLILPEEVEWIKFNVGMNGYYIVHYEDDGWDSLTGLLKGTHTAVSSNDRASLINNAFQLVSIGKLSIEKALDLSLYLKHETEIMPVFQGLNELIPMYKLMEKRDMNEVETQFKAFLIRLLRDLIDKQTWTDEGSVSERMLRSQLLLLACVHNYQPCVQRAEGYFRKWKESNGNLSLPVDVTLAVFAVGAQSTEGWDFLYSKYQFSLSSTEKSQIEFALCRTQNKEKLQWLLDESFKGDKIKTQEFPQILTLIGRNPVGYPLAWQFLRKNWNKLVQKFELGSSSIAHMVMGTTNQFSTRTRLEEVKGFFSSLKENGSQLRCVQQTIETIEENIGWMDKNFDKIRVWLQSEKLERM.

A topological domain (cytoplasmic) is located at residue methionine 1. A helical; Signal-anchor for type II membrane protein membrane pass occupies residues 2 to 21 (VFLPLKWSLATMSFLLSSLL). Topologically, residues 22–941 (ALLTVSTPSW…WLQSEKLERM (920 aa)) are lumenal. N-linked (GlcNAc...) asparagine glycans are attached at residues asparagine 70 and asparagine 154. Residues glutamate 183 and 317–321 (GAMEN) contribute to the substrate site. Histidine 353 is a binding site for Zn(2+). The active-site Proton acceptor is glutamate 354. Residues histidine 357 and glutamate 376 each coordinate Zn(2+). 2 disulfide bridges follow: cysteine 404–cysteine 443 and cysteine 736–cysteine 743. An N-linked (GlcNAc...) asparagine glycan is attached at asparagine 414. 2 N-linked (GlcNAc...) asparagine glycosylation sites follow: asparagine 760 and asparagine 901.

This sequence belongs to the peptidase M1 family. As to quaternary structure, monomer. May also exist as a heterodimer; with ERAP2. Interacts with RBMX. Zn(2+) is required as a cofactor. Post-translationally, N-glycosylated. Ubiquitous.

The protein resides in the endoplasmic reticulum membrane. Aminopeptidase that plays a central role in peptide trimming, a step required for the generation of most HLA class I-binding peptides. Peptide trimming is essential to customize longer precursor peptides to fit them to the correct length required for presentation on MHC class I molecules. Strongly prefers substrates 9-16 residues long. Rapidly degrades 13-mer to a 9-mer and then stops. Preferentially hydrolyzes the residue Leu and peptides with a hydrophobic C-terminus, while it has weak activity toward peptides with charged C-terminus. May play a role in the inactivation of peptide hormones. May be involved in the regulation of blood pressure through the inactivation of angiotensin II and/or the generation of bradykinin in the kidney. The protein is Endoplasmic reticulum aminopeptidase 1 (ERAP1) of Homo sapiens (Human).